The primary structure comprises 402 residues: Calcium-responsive transactivator (402 aa).

Positions 1 to 148 (MSVAFASARP…TLPTTSMSMS (148 aa)) are N-terminal auto-inhibitory domain; necessary for interaction with SMARCA4/BRG1. The SH2-binding signature appears at 50–53 (YQQI). Disordered regions lie at residues 72 to 129 (QSLL…GPNH), 141 to 170 (PTTS…SVPL), 195 to 250 (MHQQ…SSQQ), 262 to 290 (QYGH…YQPA), and 305 to 402 (TQHY…NYQQ). Positions 92–106 (QSGSAQGLHSQGSLS) are enriched in low complexity. The span at 117–129 (SLMQAQIGNGPNH) shows a compositional bias: polar residues. Residues 149 to 237 (GSGHGSGPGY…GGGVMGQRPM (89 aa)) form a methionine-rich intra-molecular domain region. Residues 196 to 224 (HQQAASSHYSAAQGGSQHYQGQSMAMMGQ) are compositionally biased toward low complexity. Residues 251 to 323 (YLGQEEYYGG…SQYSQQQTGY (73 aa)) form an MFD domain region. Low complexity-rich tracts occupy residues 311 to 379 (GGNS…RASQ) and 390 to 402 (YGYE…NYQQ). Residues 340–402 (NQQSYPGQQQ…EQGQYGNYQQ (63 aa)) form a necessary for nuclear localization region. The SH2-binding signature appears at 359-362 (SQYS). Residues 377–385 (ASQTGPSTQ) carry the SH3-binding motif. The tract at residues 393–402 (EQGQYGNYQQ) is necessary for interaction with CREBBP and for the recruitment of CREBBP to the nuclear bodies. An SH2-binding motif is present at residues 397-400 (YGNY).

Belongs to the SS18 family. Homodimer. Dimerization may be necessary for its function in neuronal dendritic development. Interacts (via C-terminus) with CREBBP (via N-terminus), EP300 and SMARCA4/BRG1. Interacts with the nBAF complex. Association with CREBBP facilitates transcription while the association with SMARCA4/BRG1 suppresses CREST-mediated transcription in resting neurons.

It is found in the nucleus. The protein localises to the chromosome. It localises to the centromere. The protein resides in the kinetochore. Its function is as follows. Transcriptional activator which is required for calcium-dependent dendritic growth and branching in cortical neurons. Recruits CREB-binding protein (CREBBP) to nuclear bodies. Component of the CREST-BRG1 complex, a multiprotein complex that regulates promoter activation by orchestrating a calcium-dependent release of a repressor complex and a recruitment of an activator complex. In resting neurons, transcription of the c-FOS promoter is inhibited by BRG1-dependent recruitment of a phospho-RB1-HDAC1 repressor complex. Upon calcium influx, RB1 is dephosphorylated by calcineurin, which leads to release of the repressor complex. At the same time, there is increased recruitment of CREBBP to the promoter by a CREST-dependent mechanism, which leads to transcriptional activation. The CREST-BRG1 complex also binds to the NR2B promoter, and activity-dependent induction of NR2B expression involves a release of HDAC1 and recruitment of CREBBP. The sequence is that of Calcium-responsive transactivator (SS18L1) from Bos taurus (Bovine).